We begin with the raw amino-acid sequence, 1876 residues long: 1,3-beta-glucan synthase component FKS1 (1876 aa).

2 stretches are compositionally biased toward polar residues: residues 1 to 25 (MNTD…QSQE) and 60 to 71 (QPPNESYDQDYT). The interval 1-108 (MNTDQQPYQG…PGTPGYDSYG (108 aa)) is disordered. Residues 1-454 (MNTDQQPYQG…WLHLVTNFNR (454 aa)) lie on the Cytoplasmic side of the membrane. A Glycyl lysine isopeptide (Lys-Gly) (interchain with G-Cter in ubiquitin) cross-link involves residue lysine 259. Residues threonine 269 and threonine 272 each carry the phosphothreonine modification. Residues lysine 275 and lysine 386 each participate in a glycyl lysine isopeptide (Lys-Gly) (interchain with G-Cter in ubiquitin) cross-link. A helical membrane pass occupies residues 455–475 (IWVMHISIFWMYFAYNSPTFY). Topologically, residues 476-492 (THNYQQLVDNQPLAAYK) are extracellular. Residues 493–513 (WASCALGGTVASLIQIVATLC) form a helical membrane-spanning segment. The Cytoplasmic portion of the chain corresponds to 514-531 (EWSFVPRKWAGAQHLSRR). Residues 532 to 552 (FWFLCIIFGINLGPIIFVFAY) traverse the membrane as a helical segment. Topologically, residues 553-563 (DKDTVYSTAAH) are extracellular. A helical membrane pass occupies residues 564 to 584 (VVAAVMFFVAVATIIFFSIMP). The Cytoplasmic segment spans residues 585–621 (LGGLFTSYMKKSTRRYVASQTFTAAFAPLHGLDRWMS). The helical transmembrane segment at 622-642 (YLVWVTVFAAKYSESYYFLVL) threads the bilayer. At 643 to 678 (SLRDPIRILSTTAMRCTGEYWWGAVLCKVQPKIVLG) the chain is on the extracellular side. The helical transmembrane segment at 679 to 699 (LVIATDFILFFLDTYLWYIIV) threads the bilayer. Over 700 to 1358 (NTIFSVGKSF…QPAVDWVRRY (659 aa)) the chain is Cytoplasmic. Glycyl lysine isopeptide (Lys-Gly) (interchain with G-Cter in ubiquitin) cross-links involve residues lysine 910 and lysine 915. A helical transmembrane segment spans residues 1359 to 1379 (TLSIFIVFWIAFVPIVVQELI). Topologically, residues 1380–1444 (ERGLWKATQR…RIPFSILYSR (65 aa)) are extracellular. Residues 1445 to 1465 (FAGSAIYMGARSMLMLLFGTV) form a helical membrane-spanning segment. Residues 1466-1469 (AHWQ) are Cytoplasmic-facing. A helical transmembrane segment spans residues 1470–1490 (APLLWFWASLSSLIFAPFVFN). Over 1491–1560 (PHQFAWEDFF…DASRAHRTNL (70 aa)) the chain is Extracellular. Residues lysine 1539 and lysine 1547 each participate in a glycyl lysine isopeptide (Lys-Gly) (interchain with G-Cter in ubiquitin) cross-link. The helical transmembrane segment at 1561 to 1581 (IMAEIIPCAIYAAGCFIAFTF) threads the bilayer. At 1582–1601 (INAQTGVKTTDDDRVNSVLR) the chain is on the cytoplasmic side. Residues 1602–1622 (IIICTLAPIAVNLGVLFFCMG) form a helical membrane-spanning segment. Topologically, residues 1623 to 1643 (MSCCSGPLFGMCCKKTGSVMA) are extracellular. A helical transmembrane segment spans residues 1644-1664 (GIAHGVAVIVHIAFFIVMWVL). Residues 1665–1672 (ESFNFVRM) are Cytoplasmic-facing. Residues 1673–1695 (LIGVVTCIQCQRLIFHCMTALML) form a helical membrane-spanning segment. The Extracellular portion of the chain corresponds to 1696–1802 (TREFKNDHAN…RKRMVKKYCS (107 aa)). Residues 1803–1823 (LYFLVLAIFAGCIIGPAVASA) form a helical membrane-spanning segment. Over 1824–1876 (KIHKHIGDSLDGVVHNLFQPINTTNNDTGSQMSTYQSHYYTHTPSLKTWSTIK) the chain is Cytoplasmic.

Belongs to the glycosyltransferase 48 family. Component of the 1,3-beta-glucan synthase (GS) complex, composed of two alternate catalytic subunits FKS1 or GSC2, and a regulatory subunit RHO1. Interacts with RHO1, which is a GTP-binding protein.

The protein resides in the mitochondrion. It localises to the cell membrane. It carries out the reaction [(1-&gt;3)-beta-D-glucosyl](n) + UDP-alpha-D-glucose = [(1-&gt;3)-beta-D-glucosyl](n+1) + UDP + H(+). Functionally, alternate catalytic subunit of the 1,3-beta-glucan synthase (GS) complex. Synthesizes 1,3-beta-glucan, a major structural component of the yeast cell wall. Involved in cell wall synthesis, maintenance and remodeling. This chain is 1,3-beta-glucan synthase component FKS1 (FKS1), found in Saccharomyces cerevisiae (strain ATCC 204508 / S288c) (Baker's yeast).